Reading from the N-terminus, the 316-residue chain is tRNA dimethylallyltransferase (316 aa).

ATP is bound at residue 17–24 (GPTASGKT). 19–24 (TASGKT) contacts substrate. Interaction with substrate tRNA stretches follow at residues 42 to 45 (DSAL), 166 to 170 (QRLSR), and 247 to 252 (RCVGYR).

Belongs to the IPP transferase family. Monomer. Requires Mg(2+) as cofactor.

It carries out the reaction adenosine(37) in tRNA + dimethylallyl diphosphate = N(6)-dimethylallyladenosine(37) in tRNA + diphosphate. Catalyzes the transfer of a dimethylallyl group onto the adenine at position 37 in tRNAs that read codons beginning with uridine, leading to the formation of N6-(dimethylallyl)adenosine (i(6)A). The protein is tRNA dimethylallyltransferase of Salmonella arizonae (strain ATCC BAA-731 / CDC346-86 / RSK2980).